We begin with the raw amino-acid sequence, 276 residues long: Putative hydroxypyruvate isomerase (276 aa).

Residues E150 and E249 each act as proton donor/acceptor in the active site.

The protein belongs to the hyi family.

It carries out the reaction 3-hydroxypyruvate = 2-hydroxy-3-oxopropanoate. Catalyzes the reversible isomerization between hydroxypyruvate and 2-hydroxy-3-oxopropanoate (also termed tartronate semialdehyde). The chain is Putative hydroxypyruvate isomerase (hyi) from Danio rerio (Zebrafish).